A 267-amino-acid chain; its full sequence is Exodeoxyribonuclease III (267 aa).

E34 contacts Mg(2+). Residue Y109 is part of the active site. 3 residues coordinate Mg(2+): D151, N153, and D258. D151 serves as the catalytic Proton donor/acceptor.

The protein belongs to the DNA repair enzymes AP/ExoA family. As to quaternary structure, monomer. It depends on Mg(2+) as a cofactor. Mn(2+) is required as a cofactor.

It carries out the reaction Exonucleolytic cleavage in the 3'- to 5'-direction to yield nucleoside 5'-phosphates.. In terms of biological role, major apurinic-apyrimidinic endonuclease of E.coli. It removes the damaged DNA at cytosines and guanines by cleaving on the 3'-side of the AP site by a beta-elimination reaction. The chain is Exodeoxyribonuclease III (xthA) from Haemophilus influenzae (strain ATCC 51907 / DSM 11121 / KW20 / Rd).